Reading from the N-terminus, the 252-residue chain is MIRRYLYTFLLVMTLAGCKDKDLLKGLDQEQANEVIAVLQMHNIEANKIDSGKLGYSITVAEPDFTAAVYWIKTYQLPPRPRVEIAQMFPADSLVSSPRAEKARLYSAIEQRLEQSLQTMEGVLSARVHISYDIDAGENGRPPKPVHLSALAVYERGSPLAHQISDIKRFLKNSFADVDYDNISVVLSERSDAQLQAPGTPVKRNSFATSWIVLIILLSVMSAGFGVWYYKNHYARNKKGITADDKAKSSNE.

An N-terminal signal peptide occupies residues 1 to 17 (MIRRYLYTFLLVMTLAG). A lipid anchor (N-palmitoyl cysteine) is attached at Cys-18. Cys-18 carries S-diacylglycerol cysteine lipidation. The chain crosses the membrane as a helical span at residues 207 to 227 (FATSWIVLIILLSVMSAGFGV).

The protein belongs to the YscJ lipoprotein family.

The protein resides in the cell outer membrane. Required for invasion of epithelial cells. Could be involved in protein secretion. This is Lipoprotein PrgK (prgK) from Salmonella typhimurium (strain LT2 / SGSC1412 / ATCC 700720).